Consider the following 419-residue polypeptide: Zinc finger protein Pegasus (419 aa).

Lys-5 participates in a covalent cross-link: Glycyl lysine isopeptide (Lys-Gly) (interchain with G-Cter in SUMO2). C2H2-type zinc fingers lie at residues 82 to 104 (LKCR…IRIH), 110 to 132 (HRCH…MRSH), and 138 to 161 (YKCE…RRKH). Lys-185 is covalently cross-linked (Glycyl lysine isopeptide (Lys-Gly) (interchain with G-Cter in SUMO2)). Polar residues-rich tracts occupy residues 223–236 (QTDS…TTPT) and 262–273 (LSSLPPENQNPA). 2 disordered regions span residues 223-247 (QTDS…QELM) and 262-356 (LSSL…PALP). Over residues 290–311 (QPSTQAVVSAVSASIPQSSSPT) the composition is skewed to low complexity. Over residues 332–349 (SEPSAHTSTPSIGNSQPS) the composition is skewed to polar residues. 2 consecutive C2H2-type zinc fingers follow at residues 364–386 (HHCQ…MGCH) and 392–416 (FQCN…RGQH).

This sequence belongs to the Ikaros C2H2-type zinc-finger protein family. In terms of assembly, self-associates. Interacts with other family members; IKZF1, IKZF2, IKZF3 and IKZF4. Expressed in brain, heart, skeletal muscle, kidney, and liver. Expressed in the hematopoietic cell lines MOLT-4, NALM-6 and K-562. Highly expressed in THP-1 and M-07e cell lines, which have characteristics of myeloid and early megakaryocytic cells respectively.

Its subcellular location is the nucleus. Functionally, transcriptional repressor that binds the core 5'GNNTGTNG-3' DNA consensus sequence. Involved in megakaryocyte differentiation. In Homo sapiens (Human), this protein is Zinc finger protein Pegasus (IKZF5).